The primary structure comprises 395 residues: 1-deoxy-D-xylulose 5-phosphate reductoisomerase (395 aa).

NADPH-binding residues include Thr-10, Gly-11, Ser-12, Ile-13, and Asn-123. Lys-124 provides a ligand contact to 1-deoxy-D-xylulose 5-phosphate. Glu-125 contacts NADPH. Mn(2+) is bound at residue Asp-149. The 1-deoxy-D-xylulose 5-phosphate site is built by Ser-150, Glu-151, Ser-185, and His-208. Glu-151 is a Mn(2+) binding site. Gly-214 is a binding site for NADPH. The 1-deoxy-D-xylulose 5-phosphate site is built by Ser-221, Asn-226, Lys-227, and Glu-230. Residue Glu-230 coordinates Mn(2+).

The protein belongs to the DXR family. Mg(2+) is required as a cofactor. Mn(2+) serves as cofactor.

It carries out the reaction 2-C-methyl-D-erythritol 4-phosphate + NADP(+) = 1-deoxy-D-xylulose 5-phosphate + NADPH + H(+). Its pathway is isoprenoid biosynthesis; isopentenyl diphosphate biosynthesis via DXP pathway; isopentenyl diphosphate from 1-deoxy-D-xylulose 5-phosphate: step 1/6. Catalyzes the NADPH-dependent rearrangement and reduction of 1-deoxy-D-xylulose-5-phosphate (DXP) to 2-C-methyl-D-erythritol 4-phosphate (MEP). This chain is 1-deoxy-D-xylulose 5-phosphate reductoisomerase, found in Shewanella sediminis (strain HAW-EB3).